A 228-amino-acid chain; its full sequence is U1 small nuclear ribonucleoprotein C-2 (228 aa).

The Matrin-type zinc finger occupies 4–36; the sequence is YYCDYCDTYLTHDSPSVRKQHNAGYKHKANVRT. Residues 105-228 are disordered; it reads PGVRPPILPA…SYALPSEGNH (124 aa). Composition is skewed to pro residues over residues 107 to 156 and 164 to 175; these read VRPP…PPGS and LPRPPTLPPPTS. The span at 178–190 shows a compositional bias: low complexity; the sequence is PGAPIPNSAAPPA. Positions 196-214 are enriched in pro residues; that stretch reads PPAPAGPTSGAPPAPPTAP.

The protein belongs to the U1 small nuclear ribonucleoprotein C family. In terms of assembly, U1 snRNP is composed of the 7 core Sm proteins B/B', D1, D2, D3, E, F and G that assemble in a heptameric protein ring on the Sm site of the small nuclear RNA to form the core snRNP, and at least 3 U1 snRNP-specific proteins U1-70K, U1-A and U1-C. U1-C interacts with U1 snRNA and the 5' splice-site region of the pre-mRNA.

It is found in the nucleus. Its function is as follows. Component of the spliceosomal U1 snRNP, which is essential for recognition of the pre-mRNA 5' splice-site and the subsequent assembly of the spliceosome. U1-C is directly involved in initial 5' splice-site recognition for both constitutive and regulated alternative splicing. The interaction with the 5' splice-site seems to precede base-pairing between the pre-mRNA and the U1 snRNA. Stimulates commitment or early (E) complex formation by stabilizing the base pairing of the 5' end of the U1 snRNA and the 5' splice-site region. The polypeptide is U1 small nuclear ribonucleoprotein C-2 (Sorghum bicolor (Sorghum)).